We begin with the raw amino-acid sequence, 426 residues long: Histidine--tRNA ligase (426 aa).

This sequence belongs to the class-II aminoacyl-tRNA synthetase family. Homodimer.

It localises to the cytoplasm. The enzyme catalyses tRNA(His) + L-histidine + ATP = L-histidyl-tRNA(His) + AMP + diphosphate + H(+). The sequence is that of Histidine--tRNA ligase from Corynebacterium kroppenstedtii (strain DSM 44385 / JCM 11950 / CIP 105744 / CCUG 35717).